The primary structure comprises 87 residues: Pyocin-S1 immunity protein (87 aa).

The protein belongs to the colicins ColE2/ColE8/ColE9 and pyocins S1/S2 family.

This chain is Pyocin-S1 immunity protein (imm1), found in Pseudomonas aeruginosa.